The primary structure comprises 434 residues: UDP-N-acetylmuramoylalanine--D-glutamate ligase (434 aa).

Residue 113 to 119 coordinates ATP; that stretch reads GSNGKST.

It belongs to the MurCDEF family.

It localises to the cytoplasm. It catalyses the reaction UDP-N-acetyl-alpha-D-muramoyl-L-alanine + D-glutamate + ATP = UDP-N-acetyl-alpha-D-muramoyl-L-alanyl-D-glutamate + ADP + phosphate + H(+). It participates in cell wall biogenesis; peptidoglycan biosynthesis. In terms of biological role, cell wall formation. Catalyzes the addition of glutamate to the nucleotide precursor UDP-N-acetylmuramoyl-L-alanine (UMA). In Pasteurella multocida (strain Pm70), this protein is UDP-N-acetylmuramoylalanine--D-glutamate ligase.